The following is a 290-amino-acid chain: MRLPVLGKDTVRMRDPEGLQDKITRIQRGGQEKLQIISDFDMTLSRFSRNGERCPTCYNIIDNSNIISDEGRKKLKCLFDIYYPLEIDPKKSIEEKYPLMVEWWSKAHDLFYEQRIQKDRLAQVVKEPQATLRDGYDLFFNNLYQREIPLFIFSAGIGDVLEEIIRQAGVFHPNTKVVSNYMDFDDNGILTGFKGDLIHTYNKNSSVLKDTEYFKEISHRTNILLLGDTLGDLTMADGVSTVENIIKIGFLNDKVEELTEQFLQSYDIVLLRDETLDVVNGILQFVTAKN.

Aspartate 39 functions as the Nucleophile in the catalytic mechanism. Mg(2+) contacts are provided by aspartate 39 and aspartate 41. Catalysis depends on aspartate 41, which acts as the Proton donor. Glutamate 86 lines the CMP pocket. Residue glutamate 86 participates in N(7)-methyl-GMP binding. Substrate is bound by residues 154–155 (SA) and lysine 203. Mg(2+) is bound at residue aspartate 228.

Belongs to the pyrimidine 5'-nucleotidase family. As to quaternary structure, monomer.

It localises to the cytoplasm. The enzyme catalyses N(7)-methyl-GMP + H2O = N(7)-methylguanosine + phosphate. The catalysed reaction is CMP + H2O = cytidine + phosphate. It catalyses the reaction a ribonucleoside 5'-phosphate + H2O = a ribonucleoside + phosphate. In terms of biological role, specifically hydrolyzes 7-methylguanosine monophosphate (m(7)GMP) to 7-methylguanosine and inorganic phosphate. The specific activity for m(7)GMP may protect cells against undesired salvage of m(7)GMP and its incorporation into nucleic acids. Also has weak activity for CMP. UMP and purine nucleotides are poor substrates. In Xenopus laevis (African clawed frog), this protein is 7-methylguanosine phosphate-specific 5'-nucleotidase B (Nt5c3b-b).